Consider the following 94-residue polypeptide: Defensin-like protein 21 (94 aa).

Positions 1 to 26 (MVRTNVVSFVLFAAIVLCIGSIQIDG) are cleaved as a signal peptide. 4 cysteine pairs are disulfide-bonded: Cys41/Cys92, Cys51/Cys79, Cys65/Cys88, and Cys69/Cys90.

This sequence belongs to the DEFL family.

The protein resides in the secreted. The chain is Defensin-like protein 21 from Arabidopsis thaliana (Mouse-ear cress).